We begin with the raw amino-acid sequence, 82 residues long: Small ribosomal subunit protein bS16 (82 aa).

This sequence belongs to the bacterial ribosomal protein bS16 family.

The sequence is that of Small ribosomal subunit protein bS16 from Dehalococcoides mccartyi (strain ATCC BAA-2266 / KCTC 15142 / 195) (Dehalococcoides ethenogenes (strain 195)).